Here is a 343-residue protein sequence, read N- to C-terminus: Ribosomal RNA small subunit methyltransferase C (343 aa).

This sequence belongs to the methyltransferase superfamily. RsmC family. As to quaternary structure, monomer.

It localises to the cytoplasm. The enzyme catalyses guanosine(1207) in 16S rRNA + S-adenosyl-L-methionine = N(2)-methylguanosine(1207) in 16S rRNA + S-adenosyl-L-homocysteine + H(+). Its function is as follows. Specifically methylates the guanine in position 1207 of 16S rRNA in the 30S particle. This chain is Ribosomal RNA small subunit methyltransferase C, found in Escherichia coli O6:K15:H31 (strain 536 / UPEC).